Reading from the N-terminus, the 731-residue chain is Elongation factor 2 (731 aa).

The 216-residue stretch at 19-234 (EYIRNIGICA…DIIDYCNEGK (216 aa)) folds into the tr-type G domain. Residues 28–35 (AHIDHGKT), 94–98 (DTPGH), and 148–151 (NKVD) contribute to the GTP site. Residue His-598 is modified to Diphthamide.

Belongs to the TRAFAC class translation factor GTPase superfamily. Classic translation factor GTPase family. EF-G/EF-2 subfamily.

The protein localises to the cytoplasm. Its function is as follows. Catalyzes the GTP-dependent ribosomal translocation step during translation elongation. During this step, the ribosome changes from the pre-translocational (PRE) to the post-translocational (POST) state as the newly formed A-site-bound peptidyl-tRNA and P-site-bound deacylated tRNA move to the P and E sites, respectively. Catalyzes the coordinated movement of the two tRNA molecules, the mRNA and conformational changes in the ribosome. The protein is Elongation factor 2 of Methanobrevibacter ruminantium (strain ATCC 35063 / DSM 1093 / JCM 13430 / OCM 146 / M1) (Methanobacterium ruminantium).